The following is a 320-amino-acid chain: Cytochrome f (320 aa).

A signal peptide spans 1–35 (MQNRNTFSWVKEPINRSISVLIIIYVITQTSISNA). Residues Tyr-36, Cys-56, Cys-59, and His-60 each contribute to the heme site. Residues 286–306 (VQGLLFFLASVTLAQIFLVLK) form a helical membrane-spanning segment.

This sequence belongs to the cytochrome f family. As to quaternary structure, the 4 large subunits of the cytochrome b6-f complex are cytochrome b6, subunit IV (17 kDa polypeptide, petD), cytochrome f and the Rieske protein, while the 4 small subunits are PetG, PetL, PetM and PetN. The complex functions as a dimer. Heme serves as cofactor.

The protein resides in the plastid. It is found in the chloroplast thylakoid membrane. Component of the cytochrome b6-f complex, which mediates electron transfer between photosystem II (PSII) and photosystem I (PSI), cyclic electron flow around PSI, and state transitions. The sequence is that of Cytochrome f from Piper cenocladum (Ant piper).